The chain runs to 362 residues: Protein mab-21-like 3 (362 aa).

This sequence belongs to the mab-21 family.

The protein is Protein mab-21-like 3 (MAB21L3) of Homo sapiens (Human).